We begin with the raw amino-acid sequence, 141 residues long: Hemoglobin subunit alpha (141 aa).

Residues 1-141 (VLSPADKNNV…VSTVLTSKYR (141 aa)) enclose the Globin domain. S3 is modified (phosphoserine). 2 positions are modified to N6-succinyllysine: K7 and K11. K16 carries the N6-acetyllysine; alternate modification. Residue K16 is modified to N6-succinyllysine; alternate. Phosphotyrosine is present on Y24. Residue S35 is modified to Phosphoserine. An N6-succinyllysine modification is found at K40. A Phosphoserine modification is found at S49. H58 serves as a coordination point for O2. A heme b-binding site is contributed by H87. S102 carries the phosphoserine modification. T108 bears the Phosphothreonine mark. Phosphoserine occurs at positions 124 and 131. 2 positions are modified to phosphothreonine: T134 and T137. Phosphoserine is present on S138.

It belongs to the globin family. As to quaternary structure, heterotetramer of two alpha chains and two beta chains. As to expression, red blood cells.

Functionally, involved in oxygen transport from the lung to the various peripheral tissues. Its function is as follows. Hemopressin acts as an antagonist peptide of the cannabinoid receptor CNR1. Hemopressin-binding efficiently blocks cannabinoid receptor CNR1 and subsequent signaling. The chain is Hemoglobin subunit alpha (HBA) from Urocitellus townsendii (Townsend's ground squirrel).